The following is a 1238-amino-acid chain: Lysine-specific demethylase JMJ703 (1238 aa).

Positions 56 to 79 (EECQPSAAVSRSDTPCSTSGTQTC) are disordered. The segment covering 62-79 (AAVSRSDTPCSTSGTQTC) has biased composition (polar residues). The JmjN domain occupies 154–195 (APVFYPTEEEFEDTLKYIESIRPMAEPYGICRIVPPSSWKPP). The interval 215–266 (KVDKLQNRKSSKKGRRGGMMKRRKLAESEENSATAHTQTGMQQSPERFGFEP) is disordered. Residues 221 to 238 (NRKSSKKGRRGGMMKRRK) are compositionally biased toward basic residues. Over residues 245–259 (NSATAHTQTGMQQSP) the composition is skewed to polar residues. One can recognise a JmjC domain in the interval 348–514 (KYAQSGWNLN…IGHNAVELYR (167 aa)). Residues histidine 394, glutamate 396, and histidine 482 each contribute to the Fe cation site. 4 disordered regions span residues 699–725 (GPRR…QKDE), 777–798 (YNGG…SSPS), 834–863 (TGDS…SSLE), and 910–978 (ASSQ…LQRT). Low complexity predominate over residues 706 to 719 (SQASAVSLVSSSTS). Positions 910 to 923 (ASSQQFVRTGPWTQ) are enriched in polar residues. Low complexity predominate over residues 924 to 936 (SASHEASSPSTSA). Residues 964–978 (SFSNQQPNDGRLQRT) show a composition bias toward polar residues. The FYR N-terminal domain maps to 1019–1077 (VVHRFKCSVEPLEIGVVLSGRLWSSSQAIFPKGFRSRVKYFSIVDPIQMAYYISEILDA). The region spanning 1079–1169 (MQGPLFMVKL…HICTEYWRSR (91 aa)) is the FYR C-terminal domain.

Fe(2+) serves as cofactor. Expressed in roots, leaf sheaths, stems and panicles.

Its subcellular location is the nucleus. It catalyses the reaction N(6),N(6),N(6)-trimethyl-L-lysyl(4)-[histone H3] + 3 2-oxoglutarate + 3 O2 = L-lysyl(4)-[histone H3] + 3 formaldehyde + 3 succinate + 3 CO2. Histone demethylase that demethylates 'Lys-4' (H3K4me) of histone H3 with a specific activity for H3K4me3, H3K4me2 and H3K4me1. No activity on H3K9me3/2/1, H3K27me3/2/1 and H3K36me3/2/1. Involved in the control of stem elongation by regulating methylation states of H3K4me3 on cytokinin oxidase (CKX) gene family, which may cause increased expression of CKX genes and reduced cytokinin levels. Prevents ectopic retrotransposition by regulating the levels of H3K4me3 in two non-LTR retrotransposons KARMA and LINE-1 (L1) and reinforcing their repressed states. The sequence is that of Lysine-specific demethylase JMJ703 (JMJ703) from Oryza sativa subsp. japonica (Rice).